A 33-amino-acid polypeptide reads, in one-letter code: Zinc metalloproteinase-disintegrin-like moojenin (33 aa).

Residues 8–33 (PPVCGNELLEVGEECDCGTPENCQNE) form the Disintegrin domain. Residues Val10, Asn13, Leu15, Glu17, Glu20, and Asp23 each coordinate Ca(2+). Disulfide bonds link Cys11/Cys30 and Cys24/Cys30.

The protein belongs to the venom metalloproteinase (M12B) family. P-III subfamily. P-IIIb sub-subfamily. Monomer. It depends on Zn(2+) as a cofactor. The N-terminus (from the N-terminal region of the metalloproteinase domain) is blocked. Expressed by the venom gland.

The protein resides in the secreted. With respect to regulation, the fibrinogenolytic and coagulant activities of the moojenin were abolished by preincubation with EDTA, 1,10-phenanthroline and beta-mercaptoethanol. In terms of biological role, metalloproteinase moojenin: snake venom metalloproteinase that cleaves both alpha- and beta-chains of fibrinogen, but not the gamma-chain. Shows a coagulant activity on bovine plasma about 3.1 fold lower than crude venom. Renders the blood incoagulable when intraperitoneally administered into mice. Induces necrosis in liver and muscle, but does not cause histological alterations in mouse lungs, kidney or heart. The protein is Zinc metalloproteinase-disintegrin-like moojenin of Bothrops moojeni (Lance-headed viper).